The primary structure comprises 405 residues: Replication factor C large subunit (405 aa).

47–54 (GPPGVGKT) is an ATP binding site.

It belongs to the activator 1 small subunits family. RfcL subfamily. Heteromultimer composed of small subunits (RfcS) and large subunits (RfcL).

In terms of biological role, part of the RFC clamp loader complex which loads the PCNA sliding clamp onto DNA. The chain is Replication factor C large subunit from Saccharolobus islandicus (strain M.16.27) (Sulfolobus islandicus).